The chain runs to 131 residues: Antileukoproteinase (131 aa).

The first 25 residues, 1–25 (MKSCGLLPFTVLLALGILAPWTVEG), serve as a signal peptide directing secretion. 2 consecutive WAP domains span residues 29–77 (DAIK…VNPV) and 83–131 (VWRK…LPPM). 8 disulfides stabilise this stretch: cysteine 36-cysteine 65, cysteine 44-cysteine 69, cysteine 52-cysteine 64, cysteine 58-cysteine 73, cysteine 90-cysteine 119, cysteine 97-cysteine 123, cysteine 106-cysteine 118, and cysteine 112-cysteine 127. The elastase inhibitory domain stretch occupies residues 85–131 (RKPGRCVKTQARCMMLNPPNVCQRDGQCDGKYKCCEGICGKVCLPPM).

Interacts with GRN; interaction protects progranulin from proteolysis. As to expression, detected in bronchial epithelial cells. Detected in bronchoalveolar fluid after infection with M.tuberculosis (at protein level). Highest expression in lung, spleen, intestine and epididymis with lower levels in liver and seminal vesicle. No expression in brain, heart, kidney and muscle.

The protein resides in the secreted. Functionally, acid-stable proteinase inhibitor with strong affinities for trypsin, chymotrypsin, elastase, and cathepsin G. Modulates the innate immune response after bacterial infection. Contributes to regulate the inflammatory and immune responses to the intracellular parasite L.major. Down-regulates responses to bacterial lipopolysaccharide (LPS). Plays a role in regulating the activation of NF-kappa-B and inflammatory responses. Has antimicrobial activity against mycobacteria, but not against salmonella. Contributes to normal resistance against infection by M.tuberculosis. Required for normal resistance to L.major. Required for normal wound healing, probably by preventing tissue damage by limiting protease activity. Together with ELANE, required for normal differentiation and proliferation of bone marrow myeloid cells. The chain is Antileukoproteinase (Slpi) from Mus musculus (Mouse).